The primary structure comprises 63 residues: MVFQVVCSTCGKDISHERYKLIIRKKSLKDVLVSVKNKCCRLKLSTQIEPQRNLTVQPLLDIN.

Belongs to the poxviridae DNA-directed RNA polymerase 7 kDa subunit family. The DNA-dependent RNA polymerase (vRNAP) consists of eight subunits encoded by early viral genes and termed according to their apparent molecular masses Rpo147, Rpo132, Rpo35, Rpo30, Rpo22, Rpo19, Rpo18, and Rpo7. The same holoenzyme, with the addition of the transcription-specificity factor RAP94, is used for early gene expression.

It localises to the virion. The catalysed reaction is RNA(n) + a ribonucleoside 5'-triphosphate = RNA(n+1) + diphosphate. Its function is as follows. Part of the DNA-dependent RNA polymerase which catalyzes the transcription of viral DNA into RNA using the four ribonucleoside triphosphates as substrates. Responsible for the transcription of early, intermediate and late genes. DNA-dependent RNA polymerase associates with the early transcription factor (ETF), itself composed of OPG118 and OPG134, thereby allowing the early genes transcription. Late transcription, and probably also intermediate transcription, require newly synthesized RNA polymerase. This Homo sapiens (Human) protein is DNA-directed RNA polymerase 7 kDa subunit (OPG090).